Consider the following 164-residue polypeptide: Phosphopantetheine adenylyltransferase (164 aa).

T9 lines the substrate pocket. ATP contacts are provided by residues 9–10 (TF) and H17. 3 residues coordinate substrate: K41, L73, and R87. ATP contacts are provided by residues 88 to 90 (GLR), E98, and 123 to 129 (YMFISAT).

It belongs to the bacterial CoaD family. In terms of assembly, homohexamer. It depends on Mg(2+) as a cofactor.

It is found in the cytoplasm. The catalysed reaction is (R)-4'-phosphopantetheine + ATP + H(+) = 3'-dephospho-CoA + diphosphate. Its pathway is cofactor biosynthesis; coenzyme A biosynthesis; CoA from (R)-pantothenate: step 4/5. In terms of biological role, reversibly transfers an adenylyl group from ATP to 4'-phosphopantetheine, yielding dephospho-CoA (dPCoA) and pyrophosphate. This Nitrosomonas eutropha (strain DSM 101675 / C91 / Nm57) protein is Phosphopantetheine adenylyltransferase.